A 472-amino-acid polypeptide reads, in one-letter code: Glutamate--tRNA ligase (472 aa).

A 'HIGH' region motif is present at residues 8–18 (PSPTGFLHIGS). A 'KMSKS' region motif is present at residues 239 to 243 (KLSKR). Residue K242 coordinates ATP.

The protein belongs to the class-I aminoacyl-tRNA synthetase family. Glutamate--tRNA ligase type 1 subfamily. In terms of assembly, monomer.

It localises to the cytoplasm. It catalyses the reaction tRNA(Glu) + L-glutamate + ATP = L-glutamyl-tRNA(Glu) + AMP + diphosphate. Its function is as follows. Catalyzes the attachment of glutamate to tRNA(Glu) in a two-step reaction: glutamate is first activated by ATP to form Glu-AMP and then transferred to the acceptor end of tRNA(Glu). The protein is Glutamate--tRNA ligase of Solibacter usitatus (strain Ellin6076).